A 350-amino-acid chain; its full sequence is Zona pellucida-binding protein 1 (350 aa).

Positions M1–R38 are cleaved as a signal peptide. N-linked (GlcNAc...) asparagine glycans are attached at residues N113, N186, and N339.

It belongs to the zona pellucida-binding protein Sp38 family. In terms of processing, N-glycosylated. In terms of tissue distribution, expressed in testis. Detected in sperm cells.

It is found in the cytoplasmic vesicle. The protein localises to the secretory vesicle. It localises to the acrosome. The protein resides in the secreted. Its subcellular location is the acrosome membrane. Functionally, plays a role in acrosome compaction and sperm morphogenesis. Is implicated in sperm-oocyte interaction during fertilization. In Sus scrofa (Pig), this protein is Zona pellucida-binding protein 1 (ZPBP).